The chain runs to 649 residues: Flavin-dependent oxygenase ucdD (649 aa).

The FAD site is built by Q92, I185, Y344, D370, and S386.

It belongs to the PheA/TfdB FAD monooxygenase family. In terms of assembly, homodimer. FAD is required as a cofactor.

Its pathway is secondary metabolite biosynthesis. Its function is as follows. Nonribosomal peptide synthetase that mediates the biosynthesis of usterphenyllins and uscandidusins, p-terphenyl derivatives. Within the pathway, ucdD catalyzes the formation of 3,15-dihydroxyterphenyllin via dihydroxylation at C-3 of ring A and C-15 of ring C of the terphenyllin intermediate. The pathway begin with the biosynthesis of 4-hydroxyphenylpyruvate (HPPA) from L-tyrosine, possibly by the aminotransferase ucdG. The nonribosomal peptide synthetase ucdA then condenses two HPPA units to produce atromentin. The key step in this pathway is the reduction and dehydration of atromentin to form a terphenyl triol intermediate, performed by the NAD-dependent dehydrogenase ucdB. Further O-methylation by the methyltransferase ucdC forms terphenyllin carrying two methoxy moieties at C-9 and C-12, and subsequent dihydroxylation at C-3 of ring A and C-15 of ring C by the flavin-dependent oxygenase ucdD leads to 3,15-dihydroxyterphenyllin. Prenylation by ucdE at position C-5 of ring A forms usterphenyllin B, and is followed by a second prenylation at position C-14 of ring C to form usterphenyllin A. The following furan ring formation that leads to uscandidusins A and B was proven to be an unexpected spontaneous non-enzymatic reaction. This is Flavin-dependent oxygenase ucdD from Aspergillus ustus.